We begin with the raw amino-acid sequence, 329 residues long: DNA-directed RNA polymerase subunit alpha (329 aa).

Residues 1-234 (MQGSVTEFLK…EQLDAFVELR (234 aa)) are alpha N-terminal domain (alpha-NTD). The tract at residues 248–329 (FDPILLRPVD…WPPASLADDL (82 aa)) is alpha C-terminal domain (alpha-CTD).

Belongs to the RNA polymerase alpha chain family. Homodimer. The RNAP catalytic core consists of 2 alpha, 1 beta, 1 beta' and 1 omega subunit. When a sigma factor is associated with the core the holoenzyme is formed, which can initiate transcription.

It carries out the reaction RNA(n) + a ribonucleoside 5'-triphosphate = RNA(n+1) + diphosphate. Its function is as follows. DNA-dependent RNA polymerase catalyzes the transcription of DNA into RNA using the four ribonucleoside triphosphates as substrates. In Shewanella sp. (strain ANA-3), this protein is DNA-directed RNA polymerase subunit alpha.